The chain runs to 199 residues: Recombination protein RecR (199 aa).

Residues 57–72 (CEICGNMDTENICRIC) form a C4-type zinc finger. The 96-residue stretch at 80–175 (SVIAIVETVA…KISRLASGIP (96 aa)) folds into the Toprim domain.

This sequence belongs to the RecR family.

Its function is as follows. May play a role in DNA repair. It seems to be involved in an RecBC-independent recombinational process of DNA repair. It may act with RecF and RecO. In Rickettsia canadensis (strain McKiel), this protein is Recombination protein RecR.